Reading from the N-terminus, the 410-residue chain is WD repeat and FYVE domain-containing protein 1 (410 aa).

WD repeat units lie at residues 22–61, 66–105, 112–150, 153–192, 197–236, and 240–279; these read GHQD…QYWP, TMAS…NKMN, AHQN…NMLG, FFSS…CSVI, GHEG…GRTL, and GHHD…EEAP. Residues 281–352 form an FYVE-type zinc finger; sequence WLESDSCQKC…VCDSCYDSIK (72 aa). Cys-287, Cys-290, Cys-314, Cys-317, Cys-322, Cys-325, Cys-344, and Cys-347 together coordinate Zn(2+). One copy of the WD 7 repeat lies at 364 to 403; that stretch reads EGKHNISHMSMDVARGLMVTCGTDRVVKIWDMTPVVGCSL. Ser-408 is subject to Phosphoserine.

Binds PtdIns3P in vitro with high specificity over other phosphoinositides. Interacts (via WD repeat 2) with tyrosine-phosphorylated TLR3 (via TIR domain) in response to poly(I:C). Interacts with TLR4 in response to LPS. Interacts with TICAM1 in response to poly(I:C).

Its subcellular location is the early endosome. In terms of biological role, positively regulates TLR3- and TLR4-mediated signaling pathways by bridging the interaction between TLR3 or TLR4 and TICAM1. Promotes TLR3/4 ligand-induced activation of transcription factors IRF3 and NF-kappa-B, as well as the production of IFN-beta and inflammatory cytokines. This is WD repeat and FYVE domain-containing protein 1 (WDFY1) from Bos taurus (Bovine).